Consider the following 235-residue polypeptide: Ribonuclease 3 (235 aa).

One can recognise an RNase III domain in the interval 11-137 (RAWCAEALGY…VVGALYLDGG (127 aa)). Glutamate 51 provides a ligand contact to Mg(2+). Residue aspartate 55 is part of the active site. Residues aspartate 123 and glutamate 126 each coordinate Mg(2+). Glutamate 126 is an active-site residue. In terms of domain architecture, DRBM spans 164–233 (DYKTQLQEQL…ARQALMPEHH (70 aa)).

It belongs to the ribonuclease III family. As to quaternary structure, homodimer. Mg(2+) is required as a cofactor.

It is found in the cytoplasm. The enzyme catalyses Endonucleolytic cleavage to 5'-phosphomonoester.. Digests double-stranded RNA. Involved in the processing of primary rRNA transcript to yield the immediate precursors to the large and small rRNAs (23S and 16S). Processes some mRNAs, and tRNAs when they are encoded in the rRNA operon. Processes pre-crRNA and tracrRNA of type II CRISPR loci if present in the organism. This chain is Ribonuclease 3, found in Symbiobacterium thermophilum (strain DSM 24528 / JCM 14929 / IAM 14863 / T).